The following is a 247-amino-acid chain: PABIR family member 2 (247 aa).

The disordered stretch occupies residues 1-23 (MAQEKMELDLEPDTSYGGTLRRS). A2 is modified (N-acetylalanine). Residues S25, S33, S50, S58, and L63 each carry the phosphoserine modification. The interval 82–104 (ISQSWDESLSLSDSDFDKPEKLY) is disordered. Over residues 83 to 94 (SQSWDESLSLSD) the composition is skewed to low complexity. Position 112 is a phosphothreonine (T112). 2 positions are modified to phosphoserine: S115 and S119. Omega-N-methylarginine is present on R122. Disordered regions lie at residues 129–152 (VSSS…SQSP), 158–177 (PSVL…SQPK), and 202–230 (DILD…SPVA). 2 positions are modified to phosphoserine: S137 and S141. The segment covering 166-176 (RKGEMETESQP) has biased composition (basic and acidic residues). The segment covering 202–216 (DILDGSSSSSGLSSD) has biased composition (low complexity).

This sequence belongs to the FAM122 family. Post-translationally, isoform 3 and isoform 4 are phosphorylated on Ser-62 and Ser-64.

The chain is PABIR family member 2 from Homo sapiens (Human).